Consider the following 295-residue polypeptide: NAD kinase (295 aa).

The active-site Proton acceptor is the Asp-74. NAD(+)-binding positions include 74–75 (DG), 148–149 (NE), Arg-176, Asp-178, and 189–194 (TAYAMS).

Belongs to the NAD kinase family. It depends on a divalent metal cation as a cofactor.

It is found in the cytoplasm. The enzyme catalyses NAD(+) + ATP = ADP + NADP(+) + H(+). Its function is as follows. Involved in the regulation of the intracellular balance of NAD and NADP, and is a key enzyme in the biosynthesis of NADP. Catalyzes specifically the phosphorylation on 2'-hydroxyl of the adenosine moiety of NAD to yield NADP. The chain is NAD kinase from Acidithiobacillus ferrooxidans (strain ATCC 23270 / DSM 14882 / CIP 104768 / NCIMB 8455) (Ferrobacillus ferrooxidans (strain ATCC 23270)).